Here is a 295-residue protein sequence, read N- to C-terminus: Ornithine carbamoyltransferase, catabolic (295 aa).

Residues 49 to 52 (STRT), Q76, R100, and 127 to 130 (HPCQ) contribute to the carbamoyl phosphate site. L-ornithine is bound by residues N155, D213, and 217–218 (SM). Residues 253 to 254 (CL) and R281 each bind carbamoyl phosphate.

The protein belongs to the aspartate/ornithine carbamoyltransferase superfamily. OTCase family. In terms of assembly, homohexamer.

Its subcellular location is the cytoplasm. It carries out the reaction carbamoyl phosphate + L-ornithine = L-citrulline + phosphate + H(+). Its pathway is amino-acid degradation; L-arginine degradation via ADI pathway; carbamoyl phosphate from L-arginine: step 2/2. Its activity is regulated as follows. Arginine lead to a slight activation. Inhibited by all nucleotide phosphates. Its function is as follows. Reversibly catalyzes the transfer of the carbamoyl group from carbamoyl phosphate (CP) to the N(epsilon) atom of ornithine (ORN) to produce L-citrulline. This is Ornithine carbamoyltransferase, catabolic (arcB) from Halobacterium salinarum (strain ATCC 700922 / JCM 11081 / NRC-1) (Halobacterium halobium).